Consider the following 320-residue polypeptide: Malate dehydrogenase (320 aa).

NAD(+)-binding positions include 10-15 and aspartate 34; that span reads GAGQIG. Residues arginine 83 and arginine 89 each coordinate substrate. NAD(+) contacts are provided by residues asparagine 96 and 119–121; that span reads ITN. Positions 121 and 152 each coordinate substrate. Histidine 176 (proton acceptor) is an active-site residue.

It belongs to the LDH/MDH superfamily. MDH type 3 family.

The enzyme catalyses (S)-malate + NAD(+) = oxaloacetate + NADH + H(+). Catalyzes the reversible oxidation of malate to oxaloacetate. This chain is Malate dehydrogenase, found in Beijerinckia indica subsp. indica (strain ATCC 9039 / DSM 1715 / NCIMB 8712).